We begin with the raw amino-acid sequence, 159 residues long: Globin C, coelomic (159 aa).

Gly2 is modified (N-acetylglycine). In terms of domain architecture, Globin spans 12–158 (DLTLAQKKIV…VQAVLLVKHG (147 aa)). Heme b is bound by residues His74 and His105.

This sequence belongs to the globin family. Monomer.

The protein is Globin C, coelomic of Molpadia arenicola (Sea cucumber).